A 285-amino-acid polypeptide reads, in one-letter code: Bifunctional protein FolD (285 aa).

NADP(+) is bound by residues 166-168 (GAS) and I232.

This sequence belongs to the tetrahydrofolate dehydrogenase/cyclohydrolase family. In terms of assembly, homodimer.

It carries out the reaction (6R)-5,10-methylene-5,6,7,8-tetrahydrofolate + NADP(+) = (6R)-5,10-methenyltetrahydrofolate + NADPH. The enzyme catalyses (6R)-5,10-methenyltetrahydrofolate + H2O = (6R)-10-formyltetrahydrofolate + H(+). The protein operates within one-carbon metabolism; tetrahydrofolate interconversion. Its function is as follows. Catalyzes the oxidation of 5,10-methylenetetrahydrofolate to 5,10-methenyltetrahydrofolate and then the hydrolysis of 5,10-methenyltetrahydrofolate to 10-formyltetrahydrofolate. The sequence is that of Bifunctional protein FolD from Buchnera aphidicola subsp. Schizaphis graminum (strain Sg).